We begin with the raw amino-acid sequence, 402 residues long: Protein RETARDED ROOT GROWTH-LIKE (402 aa).

The helical transmembrane segment at 375 to 395 threads the bilayer; sequence SATLEWLIIILISMEIAISFY.

It belongs to the RMD1/sif2 family. Highly expressed in germinating seeds and developing seedlings. Also present at low levels in seedlings, roots, leaves, stems and flowers, and barely in siliques.

It is found in the mitochondrion membrane. Its subcellular location is the mitochondrion. Functionally, mediates abscisic acid (ABA) signal transduction through mitochondrial retrograde regulation involving ABI4 during seed germination and seedling growth, and leading to the production of reactive oxygen species (ROS) by the alternative respiratory pathway. Required for the maintenance of mitochondrial structure. In Arabidopsis thaliana (Mouse-ear cress), this protein is Protein RETARDED ROOT GROWTH-LIKE.